Consider the following 427-residue polypeptide: 3-isopropylmalate dehydratase large subunit (427 aa).

3 residues coordinate [4Fe-4S] cluster: Cys-308, Cys-368, and Cys-371.

Belongs to the aconitase/IPM isomerase family. LeuC type 2 subfamily. Heterodimer of LeuC and LeuD. [4Fe-4S] cluster serves as cofactor.

It carries out the reaction (2R,3S)-3-isopropylmalate = (2S)-2-isopropylmalate. Its pathway is amino-acid biosynthesis; L-leucine biosynthesis; L-leucine from 3-methyl-2-oxobutanoate: step 2/4. Functionally, catalyzes the isomerization between 2-isopropylmalate and 3-isopropylmalate, via the formation of 2-isopropylmaleate. This chain is 3-isopropylmalate dehydratase large subunit, found in Geobacter sulfurreducens (strain ATCC 51573 / DSM 12127 / PCA).